The following is a 162-amino-acid chain: NADH-quinone oxidoreductase subunit I (162 aa).

4Fe-4S ferredoxin-type domains lie at 52-82 and 93-122; these read LRRYPNGEERCIACKLCEAICPAQAITIEAG and TRYDIDMVKCIYCGFCQEACPVDAIVEGPN. Positions 62, 65, 68, 72, 102, 105, 108, and 112 each coordinate [4Fe-4S] cluster.

It belongs to the complex I 23 kDa subunit family. In terms of assembly, NDH-1 is composed of 14 different subunits. Subunits NuoA, H, J, K, L, M, N constitute the membrane sector of the complex. [4Fe-4S] cluster is required as a cofactor.

The protein localises to the cell inner membrane. It carries out the reaction a quinone + NADH + 5 H(+)(in) = a quinol + NAD(+) + 4 H(+)(out). Its function is as follows. NDH-1 shuttles electrons from NADH, via FMN and iron-sulfur (Fe-S) centers, to quinones in the respiratory chain. The immediate electron acceptor for the enzyme in this species is believed to be ubiquinone. Couples the redox reaction to proton translocation (for every two electrons transferred, four hydrogen ions are translocated across the cytoplasmic membrane), and thus conserves the redox energy in a proton gradient. The polypeptide is NADH-quinone oxidoreductase subunit I (Azorhizobium caulinodans (strain ATCC 43989 / DSM 5975 / JCM 20966 / LMG 6465 / NBRC 14845 / NCIMB 13405 / ORS 571)).